Consider the following 195-residue polypeptide: UPF0314 protein RL4541 (195 aa).

A run of 4 helical transmembrane segments spans residues 15–35, 64–84, 127–147, and 150–170; these read FWFVACFAVLVIQIAVEYMMG, WYTPSHIIHGFLFYGLAHLIL, GDSILNSAMDTVFMCVGFFFA, and APVALTVAIATFFEIFTGYII.

It belongs to the UPF0314 family.

The protein resides in the cell membrane. This Rhizobium johnstonii (strain DSM 114642 / LMG 32736 / 3841) (Rhizobium leguminosarum bv. viciae) protein is UPF0314 protein RL4541.